Here is a 476-residue protein sequence, read N- to C-terminus: Aspartyl/glutamyl-tRNA(Asn/Gln) amidotransferase subunit B (476 aa).

The protein belongs to the GatB/GatE family. GatB subfamily. Heterotrimer of A, B and C subunits.

It catalyses the reaction L-glutamyl-tRNA(Gln) + L-glutamine + ATP + H2O = L-glutaminyl-tRNA(Gln) + L-glutamate + ADP + phosphate + H(+). The catalysed reaction is L-aspartyl-tRNA(Asn) + L-glutamine + ATP + H2O = L-asparaginyl-tRNA(Asn) + L-glutamate + ADP + phosphate + 2 H(+). Allows the formation of correctly charged Asn-tRNA(Asn) or Gln-tRNA(Gln) through the transamidation of misacylated Asp-tRNA(Asn) or Glu-tRNA(Gln) in organisms which lack either or both of asparaginyl-tRNA or glutaminyl-tRNA synthetases. The reaction takes place in the presence of glutamine and ATP through an activated phospho-Asp-tRNA(Asn) or phospho-Glu-tRNA(Gln). This is Aspartyl/glutamyl-tRNA(Asn/Gln) amidotransferase subunit B from Latilactobacillus sakei subsp. sakei (strain 23K) (Lactobacillus sakei subsp. sakei).